Reading from the N-terminus, the 96-residue chain is DNA-binding protein Saci_1468 (96 aa).

This sequence belongs to the PDCD5 family.

This is DNA-binding protein Saci_1468 from Sulfolobus acidocaldarius (strain ATCC 33909 / DSM 639 / JCM 8929 / NBRC 15157 / NCIMB 11770).